The chain runs to 188 residues: MSIKSDKWIRRMAEQHGMIEPFAPGQVREQDGRKIVSYGTSSYGYDIRCADEFKIFTNINSTIVDPKNFDEKSFVDFKGDVCIIPPNSFALARTMEYFRIPRSVLTICLGKSTYARCGIIVNVTPFEPEWEGYVTLEFSNTTPLPAKIYAGEGCAQVLFFESDEVCETSYRDRGGKYQGQHGVTLPKT.

Residues 111–116 (KSTYAR), 135–137 (TLE), glutamine 156, tyrosine 170, and glutamine 180 contribute to the dCTP site. The Proton donor/acceptor role is filled by glutamate 137.

This sequence belongs to the dCTP deaminase family. As to quaternary structure, homotrimer.

It catalyses the reaction dCTP + H2O + H(+) = dUTP + NH4(+). It participates in pyrimidine metabolism; dUMP biosynthesis; dUMP from dCTP (dUTP route): step 1/2. Its function is as follows. Catalyzes the deamination of dCTP to dUTP. This Cupriavidus necator (strain ATCC 17699 / DSM 428 / KCTC 22496 / NCIMB 10442 / H16 / Stanier 337) (Ralstonia eutropha) protein is dCTP deaminase.